A 535-amino-acid chain; its full sequence is EGF domain-specific O-linked N-acetylglucosamine transferase (535 aa).

Residues 1–16 (MFILLMFVLLLQEILA) form the signal peptide. 2 N-linked (GlcNAc...) asparagine glycosylation sites follow: Asn22 and Asn271. The short motif at 303–305 (DYD) is the Required for optimal activity element. Asn362 and Asn501 each carry an N-linked (GlcNAc...) asparagine glycan.

Belongs to the glycosyltransferase 61 family.

It is found in the endoplasmic reticulum lumen. The catalysed reaction is L-seryl-[protein] + UDP-N-acetyl-alpha-D-glucosamine = 3-O-(N-acetyl-beta-D-glucosaminyl)-L-seryl-[protein] + UDP + H(+). It carries out the reaction L-threonyl-[protein] + UDP-N-acetyl-alpha-D-glucosamine = 3-O-(N-acetyl-beta-D-glucosaminyl)-L-threonyl-[protein] + UDP + H(+). Catalyzes the transfer of a single N-acetylglucosamine from UDP-GlcNAc to a serine or threonine residue in extracellular proteins resulting in their modification with a beta-linked N-acetylglucosamine (O-GlcNAc). Specifically glycosylates the Thr residue located between the fifth and sixth conserved cysteines of folded EGF-like domains. The protein is EGF domain-specific O-linked N-acetylglucosamine transferase (EOGT) of Gallus gallus (Chicken).